The following is an 86-amino-acid chain: Progonadoliberin-2 (86 aa).

The N-terminal stretch at 1-24 (MVSVCRLLLVAALLLCLQAQLSFS) is a signal peptide. Pyrrolidone carboxylic acid is present on Gln25. Gly34 is subject to Glycine amide.

The protein belongs to the GnRH family.

It is found in the secreted. Its function is as follows. Stimulates the secretion of gonadotropins. This Clarias gariepinus (North African catfish) protein is Progonadoliberin-2 (gnrh2).